Consider the following 552-residue polypeptide: MYHLGQDLPGNDVDDIEDLISADDVKPRERYENKKTVTVRAKKRSQIRLESQEEEEKPKPTIHESVIPGTQKVFVKTWGCAHNNSDSEYMAGQLAAYGYRLSGKEEADLWLLNSCTVKNPSEDTFRNEIESGMRNGKHVVVAGCVPQGAPKSDYLNGLSVIGVQQIDRVVEVVEETLKGHSVQLLQNKKKVHGRRVAGAPLSLPKVRKNPLIEIISINSGCLNQCTYCKTKHARGDLASYPPEEVVERARQSFAEGCCEIWLTSEDTGAYGRDIGSSLPELLWQLVEVIPEHCMLRVGMTNPPYILEHLEEVANVLQHPRVYSFLHVPVQSGSDSVLGEMKREYCRQDFEHVVDFLRERVPGVTIATDIICGFPTETEDDFEETMTLCAKYRFPSLFINQFFPRPGTPAAKMDRIPANLVKKRTKRLTDLFYSYEPYADRVGEIYTVLVTEVSHDKLHYVGHNKSYEQVLLPMRDNLLGTRVHVRITSASKFSMVGEILDDERDWTRCAKNQELPNVQVQTRSRERLIQRYFGIALVLGSLAFLIQLVVRLL.

The tract at residues 31–61 is disordered; sequence YENKKTVTVRAKKRSQIRLESQEEEEKPKPT. Residues 71–178 enclose the MTTase N-terminal domain; sequence QKVFVKTWGC…VVEVVEETLK (108 aa). [4Fe-4S] cluster is bound by residues cysteine 80, cysteine 115, cysteine 144, cysteine 221, cysteine 225, and cysteine 228. A Radical SAM core domain is found at 207-438; that stretch reads RKNPLIEIIS…DLFYSYEPYA (232 aa). The TRAM domain maps to 438-500; it reads ADRVGEIYTV…KFSMVGEILD (63 aa). The helical transmembrane segment at 532 to 552 threads the bilayer; sequence FGIALVLGSLAFLIQLVVRLL.

The protein belongs to the methylthiotransferase family. CDKAL1 subfamily. The cofactor is [4Fe-4S] cluster.

The protein localises to the membrane. It catalyses the reaction N(6)-L-threonylcarbamoyladenosine(37) in tRNA + (sulfur carrier)-SH + AH2 + 2 S-adenosyl-L-methionine = 2-methylsulfanyl-N(6)-L-threonylcarbamoyladenosine(37) in tRNA + (sulfur carrier)-H + 5'-deoxyadenosine + L-methionine + A + S-adenosyl-L-homocysteine + 2 H(+). Catalyzes the methylthiolation of N6-threonylcarbamoyladenosine (t(6)A), leading to the formation of 2-methylthio-N6-threonylcarbamoyladenosine (ms(2)t(6)A) at position 37 in tRNAs that read codons beginning with adenine. The chain is Threonylcarbamoyladenosine tRNA methylthiotransferase from Drosophila melanogaster (Fruit fly).